A 504-amino-acid chain; its full sequence is Maturase K (504 aa).

It belongs to the intron maturase 2 family. MatK subfamily.

The protein localises to the plastid. The protein resides in the chloroplast. Its function is as follows. Usually encoded in the trnK tRNA gene intron. Probably assists in splicing its own and other chloroplast group II introns. The sequence is that of Maturase K from Pachira aquatica (Guiana chestnut).